A 391-amino-acid chain; its full sequence is S-adenosylmethionine synthase (391 aa).

An ATP-binding site is contributed by His14. Asp16 lines the Mg(2+) pocket. Glu42 is a binding site for K(+). L-methionine-binding residues include Glu55 and Gln98. The flexible loop stretch occupies residues 98-108; the sequence is QSADIAMGVDE. ATP is bound by residues 172 to 174, 238 to 239, Asp247, 253 to 254, Ala270, and Lys274; these read DGK, RF, and RK. Asp247 is an L-methionine binding site. Residue Lys278 coordinates L-methionine.

Belongs to the AdoMet synthase family. As to quaternary structure, homotetramer; dimer of dimers. It depends on Mg(2+) as a cofactor. K(+) serves as cofactor.

The protein resides in the cytoplasm. It carries out the reaction L-methionine + ATP + H2O = S-adenosyl-L-methionine + phosphate + diphosphate. It participates in amino-acid biosynthesis; S-adenosyl-L-methionine biosynthesis; S-adenosyl-L-methionine from L-methionine: step 1/1. In terms of biological role, catalyzes the formation of S-adenosylmethionine (AdoMet) from methionine and ATP. The overall synthetic reaction is composed of two sequential steps, AdoMet formation and the subsequent tripolyphosphate hydrolysis which occurs prior to release of AdoMet from the enzyme. The protein is S-adenosylmethionine synthase of Clostridium botulinum (strain Alaska E43 / Type E3).